We begin with the raw amino-acid sequence, 227 residues long: E3 ubiquitin-protein ligase ZNRF1 (227 aa).

Positions 1–38 (MGGKQSTAARSRGPFPGVSTDDSAVPPPGGAPHFGHYR) are disordered. Gly-2 carries N-myristoyl glycine lipidation. Positions 2–10 (GGKQSTAAR) are required for endosomal and lysosomal localization and myristoylation. Residues Ser-50, Ser-52, and Ser-53 each carry the phosphoserine modification. The disordered stretch occupies residues 77–105 (RGAGDAERAPGSGGSASDSTYAHGNGYQE). Position 103 is a phosphotyrosine (Tyr-103). A Phosphoserine modification is found at Ser-123. The RING-type; atypical zinc finger occupies 184 to 225 (CVICLEELLQGDTIARLPCLCIYHKSCIDSWFEVNRSCPEHP).

Interacts with AKT1, GLUL and TUBB2A. Interacts with ZNRF2. Interacts (via its RING domain) with UBE2N. Interacts (when phosphorylated) with YWHAE. N-myristoylation targets ZNRF1 to intracellular membranes. In terms of processing, phosphorylated by SRC at Tyr-103; leading to 'Lys-63'-linked ubiquitination of TLR3, lysosomal trafficking and degradation.

Its subcellular location is the endosome. The protein resides in the lysosome. It localises to the membrane. It is found in the cytoplasmic vesicle. The protein localises to the secretory vesicle. Its subcellular location is the synaptic vesicle membrane. The catalysed reaction is S-ubiquitinyl-[E2 ubiquitin-conjugating enzyme]-L-cysteine + [acceptor protein]-L-lysine = [E2 ubiquitin-conjugating enzyme]-L-cysteine + N(6)-ubiquitinyl-[acceptor protein]-L-lysine.. The protein operates within protein modification; protein ubiquitination. Its function is as follows. E3 ubiquitin-protein ligase that plays a role in different processes including cell differentiation, receptor recycling or regulation of inflammation. Mediates the ubiquitination of AKT1 and GLUL, thereby playing a role in neuron cells differentiation. Plays a role in the establishment and maintenance of neuronal transmission and plasticity. Regulates Schwann cells differentiation by mediating ubiquitination of GLUL. Promotes neurodegeneration by mediating 'Lys-48'-linked polyubiquitination and subsequent degradation of AKT1 in axons: degradation of AKT1 prevents AKT1-mediated phosphorylation of GSK3B, leading to GSK3B activation and phosphorylation of DPYSL2/CRMP2 followed by destabilization of microtubule assembly in axons. Ubiquitinates the Na(+)/K(+) ATPase alpha-1 subunit/ATP1A1 and thereby influences its endocytosis and/or degradation. Controls ligand-induced EGFR signaling via mediating receptor ubiquitination and recruitment of the ESCRT machinery. Acts as a negative feedback mechanism controlling TLR3 trafficking by mediating TLR3 'Lys-63'-linked polyubiquitination to reduce type I IFN production. Modulates inflammation by promoting caveolin-1/CAV1 ubiquitination and degradation to regulate TLR4-activated immune response. This Bos taurus (Bovine) protein is E3 ubiquitin-protein ligase ZNRF1 (ZNRF1).